The sequence spans 688 residues: Sialic acid-binding Ig-like lectin 10 (688 aa).

The N-terminal stretch at 1-17 is a signal peptide; sequence MSLLLFLLSFLLDGPQG. Topologically, residues 18–543 are extracellular; that stretch reads QMESYFLQVQ…DKDSATAFSK (526 aa). The Ig-like V-type domain occupies 26 to 138; the sequence is VQRIVKAQEG…SFKEEFRLQV (113 aa). Intrachain disulfides connect C37–C172, C42–C102, and C163–C214. An N-acetylneuraminate-binding site is contributed by R120. Positions 145 to 228 constitute an Ig-like C2-type 1 domain; it reads PDIFIPEVLE…SRMSTQRTVR (84 aa). N195 and N246 each carry an N-linked (GlcNAc...) asparagine glycan. 2 Ig-like C2-type domains span residues 250–334 and 339–436; these read PDLH…LDLS and PQDL…LSLS. 2 disulfide bridges follow: C271-C318 and C375-C420. A helical membrane pass occupies residues 544 to 564; sequence GAVLGFGITALLALCLIVVIV. Residues 565 to 688 lie on the Cytoplasmic side of the membrane; it reads KTLQKKGTQE…YSDYTEVRVH (124 aa). The ITIM motif 1 signature appears at 588–593; that stretch reads LDYINV. Positions 602–656 are disordered; it reads RNWKAEPDAPSRSSPLDTHFPKPKKKQKDPHFTYPGCPDPTSSSQVPVSENNPEE. Positions 641–652 are enriched in polar residues; the sequence is PTSSSQVPVSEN. Positions 657 to 662 match the ITIM motif 2 motif; the sequence is LHYAAL. The residue at position 659 (Y659) is a Phosphotyrosine.

This sequence belongs to the immunoglobulin superfamily. SIGLEC (sialic acid binding Ig-like lectin) family. In terms of assembly, interacts with PTPN6/SHP-1 upon phosphorylation. Interacts with NCF1. Interacts with CD24; the probable CD24:SIGLEC10 complex is proposed to inhibit HGMB1-mediated tissue damage immune response. Interacts with HMGB1; the interaction is dependent on CD24. Associates with membrane IgM on the B cell surface. Interacts with RIGI, CBL and PTPN11. Post-translationally, phosphorylation of Tyr-659 is involved in binding to PTPN6. Expressed in B cells with high levels in pre-B cells and B1a cells of the peritoneal cavity.

It is found in the cell membrane. In terms of biological role, putative adhesion molecule that mediates sialic-acid dependent binding to cells. Preferentially binds to alpha-2,3- or alpha-2,6-linked sialic acid. The sialic acid recognition site may be masked by cis interactions with sialic acids on the same cell surface. In the immune response, seems to act as an inhibitory receptor upon ligand induced tyrosine phosphorylation by recruiting cytoplasmic phosphatase(s) via their SH2 domain(s) that block signal transduction through dephosphorylation of signaling molecules. Involved in negative regulation of B-cell antigen receptor signaling and specifically acts on B1 cells to inhibit Ca(2+) signaling, cellular expansion and antibody secretion. The inhibition of B cell activation is dependent on PTPN6/SHP-1. In association with CD24 may be involved in the selective suppression of the immune response to danger-associated molecular patterns (DAMPs) such as HMGB1, HSP70 and HSP90. In association with CD24 may regulate the immune repsonse of natural killer (NK) cells. Plays a role in the control of autoimmunity. During initiation of adaptive immune responses by CD8-alpha(+) dendritic cells inhibits cross-presentation by impairing the formation of MHC class I-peptide complexes. The function seems to implicate recruitment of PTPN6/SHP-1, which dephosphorylates NCF1 of the NADPH oxidase complex consequently promoting phagosomal acidification. (Microbial infection) During infection by RNA viruses inhibits RIG-I signaling in macrophages by promoting its CBL-dependent ubiquitination and degradation via PTPN11/SHP-2. In Mus musculus (Mouse), this protein is Sialic acid-binding Ig-like lectin 10 (Siglec10).